Here is a 152-residue protein sequence, read N- to C-terminus: Transcriptional repressor NrdR (152 aa).

A zinc finger spans residues 3–34; the sequence is CPSCQHNGTRVLDSRPVDDGKSIRRRRECESC. The 91-residue stretch at 49 to 139 folds into the ATP-cone domain; it reads LIVVKKEGVR…VYRQFKDINV (91 aa).

It belongs to the NrdR family. It depends on Zn(2+) as a cofactor.

Its function is as follows. Negatively regulates transcription of bacterial ribonucleotide reductase nrd genes and operons by binding to NrdR-boxes. This chain is Transcriptional repressor NrdR, found in Bacillus subtilis (strain 168).